We begin with the raw amino-acid sequence, 290 residues long: Elongation factor Ts (290 aa).

Residues 82 to 85 are involved in Mg(2+) ion dislocation from EF-Tu; that stretch reads TDFV.

This sequence belongs to the EF-Ts family.

It is found in the cytoplasm. Associates with the EF-Tu.GDP complex and induces the exchange of GDP to GTP. It remains bound to the aminoacyl-tRNA.EF-Tu.GTP complex up to the GTP hydrolysis stage on the ribosome. The chain is Elongation factor Ts from Cellvibrio japonicus (strain Ueda107) (Pseudomonas fluorescens subsp. cellulosa).